Here is a 216-residue protein sequence, read N- to C-terminus: A-type ATP synthase subunit D (216 aa).

The protein belongs to the V-ATPase D subunit family. As to quaternary structure, has multiple subunits with at least A(3), B(3), C, D, E, F, H, I and proteolipid K(x). Post-translationally, the N-terminus is blocked.

It localises to the cell membrane. Functionally, component of the A-type ATP synthase that produces ATP from ADP in the presence of a proton gradient across the membrane. This chain is A-type ATP synthase subunit D, found in Sulfurisphaera tokodaii (strain DSM 16993 / JCM 10545 / NBRC 100140 / 7) (Sulfolobus tokodaii).